The following is a 330-amino-acid chain: Stearoyl-CoA desaturase 5 (330 aa).

The Cytoplasmic segment spans residues 1 to 49 (MPGPATDAGKIPFCDAKEEIRAGLESSEGGGGPERPGARGQRQNIVWRN). Asn49 is a substrate binding site. The chain crosses the membrane as a helical span at residues 50-70 (VVLMSLLHLGAVYSLVLIPKA). Over 71–72 (KP) the chain is Lumenal. A helical membrane pass occupies residues 73 to 93 (LTLLWAYFCFLLAALGVTAGA). Positions 94 and 99 each coordinate Fe cation. Residues 94 to 99 (HRLWSH) carry the Histidine box-1 motif. Topologically, residues 94 to 193 (HRLWSHRSYR…VVRIQRKYYK (100 aa)) are cytoplasmic. The substrate site is built by Asn122, Arg129, and Asp130. 3 residues coordinate Fe cation: His131, His134, and His135. Positions 131–135 (HRAHH) match the Histidine box-2 motif. Substrate is bound by residues Arg162 and Lys163. Residues 194–214 (ISVVLMCFVVPTLVPWYIWGE) form a helical membrane-spanning segment. Ser215 is a topological domain (lumenal). Residues 216-238 (LWNSYFLASILRYTISLNISWLV) traverse the membrane as a helical segment. Trp236 contributes to the substrate binding site. Over 239–330 (NSAAHMYGNR…RKARTGDSSA (92 aa)) the chain is Cytoplasmic. Fe cation contacts are provided by His243, His272, His275, and His276. Residues 272-276 (HNYHH) carry the Histidine box-3 motif.

The protein belongs to the fatty acid desaturase type 1 family. May self-associate and form homodimers. Fe(2+) is required as a cofactor. As to expression, detected in fetal brain, and at lower levels in fetal kidney. Detected in adult brain and pancreas, and at lower levels in kidney and lung. Expressed in spiral ganglion cells and the organ of Corti of fetal cochlea.

It is found in the endoplasmic reticulum membrane. The enzyme catalyses octadecanoyl-CoA + 2 Fe(II)-[cytochrome b5] + O2 + 2 H(+) = (9Z)-octadecenoyl-CoA + 2 Fe(III)-[cytochrome b5] + 2 H2O. It catalyses the reaction hexadecanoyl-CoA + 2 Fe(II)-[cytochrome b5] + O2 + 2 H(+) = (9Z)-hexadecenoyl-CoA + 2 Fe(III)-[cytochrome b5] + 2 H2O. In terms of biological role, stearoyl-CoA desaturase that utilizes O(2) and electrons from reduced cytochrome b5 to introduce the first double bond into saturated fatty acyl-CoA substrates. Catalyzes the insertion of a cis double bond at the delta-9 position into fatty acyl-CoA substrates including palmitoyl-CoA and stearoyl-CoA. Gives rise to a mixture of 16:1 and 18:1 unsaturated fatty acids. Involved in neuronal cell proliferation and differentiation through down-regulation of EGFR/AKT/MAPK and Wnt signaling pathways. This is Stearoyl-CoA desaturase 5 (SCD5) from Homo sapiens (Human).